The following is a 412-amino-acid chain: Serine hydroxymethyltransferase (412 aa).

Residues Leu117 and 121-123 (GHL) each bind (6S)-5,6,7,8-tetrahydrofolate. Lys226 bears the N6-(pyridoxal phosphate)lysine mark. 349 to 351 (SPF) is a binding site for (6S)-5,6,7,8-tetrahydrofolate.

It belongs to the SHMT family. Homodimer. The cofactor is pyridoxal 5'-phosphate.

The protein resides in the cytoplasm. It catalyses the reaction (6R)-5,10-methylene-5,6,7,8-tetrahydrofolate + glycine + H2O = (6S)-5,6,7,8-tetrahydrofolate + L-serine. The protein operates within one-carbon metabolism; tetrahydrofolate interconversion. Its pathway is amino-acid biosynthesis; glycine biosynthesis; glycine from L-serine: step 1/1. Its function is as follows. Catalyzes the reversible interconversion of serine and glycine with tetrahydrofolate (THF) serving as the one-carbon carrier. This reaction serves as the major source of one-carbon groups required for the biosynthesis of purines, thymidylate, methionine, and other important biomolecules. Also exhibits THF-independent aldolase activity toward beta-hydroxyamino acids, producing glycine and aldehydes, via a retro-aldol mechanism. The protein is Serine hydroxymethyltransferase of Geobacillus kaustophilus (strain HTA426).